Reading from the N-terminus, the 493-residue chain is Cytochrome P450 2E1 (493 aa).

Residue 298-303 (FAGTET) participates in substrate binding. Cys437 is a binding site for heme.

The protein belongs to the cytochrome P450 family. In terms of assembly, interacts with chaperones HSP70 and HSP90; this interaction is required for initial targeting to mitochondria. Requires heme as cofactor.

The protein localises to the endoplasmic reticulum membrane. Its subcellular location is the microsome membrane. It localises to the mitochondrion inner membrane. It carries out the reaction an organic molecule + reduced [NADPH--hemoprotein reductase] + O2 = an alcohol + oxidized [NADPH--hemoprotein reductase] + H2O + H(+). The enzyme catalyses (5Z,8Z,11Z)-eicosatrienoate + reduced [NADPH--hemoprotein reductase] + O2 = 19-hydroxy-(5Z,8Z,11Z)-eicosatrienoate + oxidized [NADPH--hemoprotein reductase] + H2O + H(+). It catalyses the reaction (5Z,8Z,11Z,14Z,17Z)-eicosapentaenoate + reduced [NADPH--hemoprotein reductase] + O2 = 19-hydroxy-(5Z,8Z,11Z,14Z,17Z)-eicosapentaenoate + oxidized [NADPH--hemoprotein reductase] + H2O + H(+). The catalysed reaction is (4Z,7Z,10Z,13Z,16Z,19Z)-docosahexaenoate + reduced [NADPH--hemoprotein reductase] + O2 = 21-hydroxy-(4Z,7Z,10Z,13Z,16Z,19Z)-docosahexaenoate + oxidized [NADPH--hemoprotein reductase] + H2O + H(+). It carries out the reaction dodecanoate + reduced [NADPH--hemoprotein reductase] + O2 = 11-hydroxydodecanoate + oxidized [NADPH--hemoprotein reductase] + H2O + H(+). The enzyme catalyses tetradecanoate + reduced [NADPH--hemoprotein reductase] + O2 = 13-hydroxytetradecanoate + oxidized [NADPH--hemoprotein reductase] + H2O + H(+). It catalyses the reaction 4-nitrophenol + NADPH + O2 + H(+) = 4-nitrocatechol + NADP(+) + H2O. It participates in lipid metabolism; fatty acid metabolism. With respect to regulation, the omega-1 hydroxylase activity is stimulated by cytochrome b5. In terms of biological role, a cytochrome P450 monooxygenase involved in the metabolism of fatty acids. Mechanistically, uses molecular oxygen inserting one oxygen atom into a substrate, and reducing the second into a water molecule, with two electrons provided by NADPH via cytochrome P450 reductase (NADPH--hemoprotein reductase). Catalyzes the hydroxylation of carbon-hydrogen bonds. Hydroxylates fatty acids specifically at the omega-1 position displaying the highest catalytic activity for saturated fatty acids. May be involved in the oxidative metabolism of xenobiotics. The sequence is that of Cytochrome P450 2E1 (CYP2E1) from Oryctolagus cuniculus (Rabbit).